The primary structure comprises 234 residues: 2-C-methyl-D-erythritol 4-phosphate cytidylyltransferase (234 aa).

It belongs to the IspD/TarI cytidylyltransferase family. IspD subfamily.

It catalyses the reaction 2-C-methyl-D-erythritol 4-phosphate + CTP + H(+) = 4-CDP-2-C-methyl-D-erythritol + diphosphate. It functions in the pathway isoprenoid biosynthesis; isopentenyl diphosphate biosynthesis via DXP pathway; isopentenyl diphosphate from 1-deoxy-D-xylulose 5-phosphate: step 2/6. Its function is as follows. Catalyzes the formation of 4-diphosphocytidyl-2-C-methyl-D-erythritol from CTP and 2-C-methyl-D-erythritol 4-phosphate (MEP). The protein is 2-C-methyl-D-erythritol 4-phosphate cytidylyltransferase of Pseudomonas paraeruginosa (strain DSM 24068 / PA7) (Pseudomonas aeruginosa (strain PA7)).